Consider the following 305-residue polypeptide: Elongation factor Ts, mitochondrial (305 aa).

It belongs to the EF-Ts family.

It is found in the mitochondrion. Functionally, associates with the EF-Tu.GDP complex and induces the exchange of GDP to GTP. It remains bound to the aminoacyl-tRNA.EF-Tu.GTP complex up to the GTP hydrolysis stage on the ribosome. The protein is Elongation factor Ts, mitochondrial (tsfm) of Danio rerio (Zebrafish).